The primary structure comprises 621 residues: Stimulated by retinoic acid gene 6 protein-like (621 aa).

The Extracellular portion of the chain corresponds to 1–21 (MLAASTRTRQINITCDNPVDR). N-linked (GlcNAc...) asparagine glycosylation is present at asparagine 12. The helical transmembrane segment at 22 to 42 (EVFLHYSLIPSLCIILVLSFL) threads the bilayer. The Cytoplasmic portion of the chain corresponds to 43-53 (QRREHRRQRDD). Residues 54 to 74 (TSYLLGNHFGIIVPLDFVGTF) form a helical membrane-spanning segment. At 75–110 (SNRWSYGAAFGATANKVMFLFSEGYQPLTVPQWAQA) the chain is on the extracellular side. The chain crosses the membrane as a helical span at residues 111 to 131 (FVLFIGGMEVGLSYFPFFACL). The Cytoplasmic portion of the chain corresponds to 132–137 (SSEFQL). The helical transmembrane segment at 138 to 158 (VSSILGFSYSLTWFVVTVLQI) threads the bilayer. The Extracellular portion of the chain corresponds to 159-173 (SQCPHGQFLGRFETL). Residues 174–194 (VFYWPSLLCLGFLLGRFLHMF) form a helical membrane-spanning segment. The Cytoplasmic portion of the chain corresponds to 195 to 258 (LKALPVHLGL…CFQFPSRMVG (64 aa)). Residues 259-279 (TLLLAFICLYLFIVIEFCVFL) form a helical membrane-spanning segment. Residues 280 to 321 (HVRDKLDMFEDKLESYLTHMNETGTLTPIILQVKELISVTKG) lie on the Extracellular side of the membrane. The chain crosses the membrane as a helical span at residues 322–342 (VWVVTILPAALTCVTYLFHIL). Topologically, residues 343 to 383 (ACYRKHMKRLWAGDKHFLPQKFHSPSSAASVVAIARYSGWQ) are cytoplasmic. A helical membrane pass occupies residues 384-404 (IAYILWGYLIIHVVQSLCGVM). Residues 405-424 (LMYGLVLPIIHHRGLEMLQG) lie on the Extracellular side of the membrane. The helical transmembrane segment at 425–445 (FGLGVLTLSIVVGLIILQVWI) threads the bilayer. The Cytoplasmic segment spans residues 446–476 (AGTFFLQPKLGTSDKQKPLALNNRRAFHNFN). A helical membrane pass occupies residues 477-497 (YFLFFYNVLLGLGACLSRLLI). The Extracellular portion of the chain corresponds to 498-621 (SCLLGTWLIA…TQILLTCSDC (124 aa)). The residue at position 612 (threonine 612) is a Phosphothreonine.

Post-translationally, glycosylated. As to expression, highly expressed in liver and small intestine. Also expressed in spleen, kidney, colon, stomach, placenta, adipose tissue and isolated adipocytes.

The protein localises to the cell membrane. Functionally, acts as a high-affinity cell-surface receptor for retinol-binding protein RBP4 and mediates RBP4-dependent retinol uptake in the liver. The chain is Stimulated by retinoic acid gene 6 protein-like from Mus musculus (Mouse).